The following is a 202-amino-acid chain: Tetranectin (202 aa).

The signal sequence occupies residues 1–21 (MELWGAYLLLCLFSLLTQVTT). O-linked (GalNAc...) threonine glycosylation is present at threonine 25. 3 disulfide bridges follow: cysteine 71/cysteine 81, cysteine 98/cysteine 197, and cysteine 173/cysteine 189. Residues 77–198 (VHMKCFLAFT…CRDQLPYICQ (122 aa)) enclose the C-type lectin domain.

As to quaternary structure, homotrimer. As to expression, found in plasma.

It is found in the secreted. In terms of biological role, tetranectin binds to plasminogen and to isolated kringle 4. May be involved in the packaging of molecules destined for exocytosis. Plays a role in retinal function. In Homo sapiens (Human), this protein is Tetranectin (CLEC3B).